The chain runs to 695 residues: uncharacterized protein (695 aa).

S113 is subject to Phosphoserine. The next 12 helical transmembrane spans lie at 237-257 (FPLIFTFLLEQIFPMVCSLTV), 265-285 (LAAVSLASMTSNITLAIFEGI), 313-333 (IAFSLVIYIPFAVMWWYSEPL), 344-364 (INLTSRFLRVLILGAPAYIFF), 380-400 (GIYVLTICAPLNVLVSYTLVW), 408-428 (FIGAAIAVVLNFWLMFFLLLF), 457-477 (AFSGIIMLEAEELSYELLTLF), 488-508 (AQSAVSTMAALLYMIPFAIGI), 531-551 (QVGLSFSFIAGFINCCILVFG), 565-585 (VIKLIAQVLPLVGIVQNFDSL), 604-624 (IVNLMAYYLFGIPLALILSWF), and 633-653 (WIGIGSAMLLIGLVEAYYVLF). The segment covering 673-688 (EVDSDEYLTDSDDPDE) has biased composition (acidic residues). Residues 673 to 695 (EVDSDEYLTDSDDPDENTALLGA) are disordered.

Belongs to the multi antimicrobial extrusion (MATE) (TC 2.A.66.1) family.

The protein resides in the membrane. This is an uncharacterized protein from Saccharomyces cerevisiae (strain ATCC 204508 / S288c) (Baker's yeast).